The chain runs to 239 residues: Tetratricopeptide repeat protein 9B (239 aa).

Disordered regions lie at residues 1-57 and 99-126; these read MQRG…LGAA and QGAR…SEEQ. Ser-7 and Ser-27 each carry phosphoserine. Pro residues predominate over residues 16–31; the sequence is PEPPPRPPPALSPPGS. One copy of the TPR 1 repeat lies at 65-99; sequence AVAFKAEGQRCYREKKFREAIGKYHRALLQLKAAQ. Residues 106 to 116 show a composition bias toward pro residues; it reads LPAPAPGPTSS. One copy of the TPR 2 repeat lies at 171–204; sequence FKATYRAGIAFYHLGDYARALRYLQEARSREPTD.

The protein belongs to the TTC9 family.

This Homo sapiens (Human) protein is Tetratricopeptide repeat protein 9B (TTC9B).